Consider the following 321-residue polypeptide: Nacrein-like protein (321 aa).

The 319-residue stretch at 1-319 (RGPKNWCKVH…NKNVIVYRNH (319 aa)) folds into the Alpha-carbonic anhydrase domain. The active-site Proton acceptor is His-58.

Belongs to the alpha-carbonic anhydrase family. As to expression, component of the organic matrix of calcified shell layers like nacre and prisms.

The protein localises to the secreted. The sequence is that of Nacrein-like protein from Mytilus californianus (California mussel).